Here is a 233-residue protein sequence, read N- to C-terminus: Putative N-acetylmuramoyl-L-alanine amidase (233 aa).

The MurNAc-LAA domain occupies 1–219; that stretch reads MIDPGHGGQD…IANAIYIALK (219 aa).

It belongs to the N-acetylmuramoyl-L-alanine amidase 3 family.

It is found in the secreted. The catalysed reaction is Hydrolyzes the link between N-acetylmuramoyl residues and L-amino acid residues in certain cell-wall glycopeptides.. Its function is as follows. Cell-wall hydrolase involved in septum cleavage during cell division. In Buchnera aphidicola subsp. Schizaphis graminum (strain Sg), this protein is Putative N-acetylmuramoyl-L-alanine amidase (amiB).